A 219-amino-acid polypeptide reads, in one-letter code: Small ribosomal subunit protein uS3c (219 aa).

In terms of domain architecture, KH type-2 spans 43–118 (IKNYVQNNMI…KLNITITRIE (76 aa)).

The protein belongs to the universal ribosomal protein uS3 family. Part of the 30S ribosomal subunit.

It is found in the plastid. This is Small ribosomal subunit protein uS3c (rps3) from Cuscuta exaltata (Tall dodder).